A 422-amino-acid polypeptide reads, in one-letter code: Serine--tRNA ligase (422 aa).

229–231 (TAE) contributes to the L-serine binding site. 260–262 (RAE) serves as a coordination point for ATP. Position 283 (glutamate 283) interacts with L-serine. Residue 347-350 (EISS) participates in ATP binding. An L-serine-binding site is contributed by serine 383.

This sequence belongs to the class-II aminoacyl-tRNA synthetase family. Type-1 seryl-tRNA synthetase subfamily. Homodimer. The tRNA molecule binds across the dimer.

It localises to the cytoplasm. It carries out the reaction tRNA(Ser) + L-serine + ATP = L-seryl-tRNA(Ser) + AMP + diphosphate + H(+). The enzyme catalyses tRNA(Sec) + L-serine + ATP = L-seryl-tRNA(Sec) + AMP + diphosphate + H(+). Its pathway is aminoacyl-tRNA biosynthesis; selenocysteinyl-tRNA(Sec) biosynthesis; L-seryl-tRNA(Sec) from L-serine and tRNA(Sec): step 1/1. Its function is as follows. Catalyzes the attachment of serine to tRNA(Ser). Is also able to aminoacylate tRNA(Sec) with serine, to form the misacylated tRNA L-seryl-tRNA(Sec), which will be further converted into selenocysteinyl-tRNA(Sec). The sequence is that of Serine--tRNA ligase from Halothermothrix orenii (strain H 168 / OCM 544 / DSM 9562).